Reading from the N-terminus, the 441-residue chain is Ribulose bisphosphate carboxylase (441 aa).

The Proton acceptor role is filled by K160. Position 162 (K162) interacts with substrate. Residues K186, D188, and E189 each coordinate Mg(2+). K186 is modified (N6-carboxylysine). H278 functions as the Proton acceptor in the catalytic mechanism. Substrate contacts are provided by residues R279, H311, 364-366, and 386-389; these read SGG and QVGG.

It belongs to the RuBisCO large chain family. Type III subfamily. Homodimer. In contrast to form I RuBisCO, the form III RuBisCO is composed solely of large subunits. The cofactor is Mg(2+).

It carries out the reaction 2 (2R)-3-phosphoglycerate + 2 H(+) = D-ribulose 1,5-bisphosphate + CO2 + H2O. The catalysed reaction is D-ribulose 1,5-bisphosphate + O2 = 2-phosphoglycolate + (2R)-3-phosphoglycerate + 2 H(+). Its activity is regulated as follows. Reversibly inhibited by O(2). Functionally, catalyzes the addition of molecular CO(2) and H(2)O to ribulose 1,5-bisphosphate (RuBP), generating two molecules of 3-phosphoglycerate (3-PGA). Functions in an archaeal AMP degradation pathway, together with AMP phosphorylase and R15P isomerase. This is Ribulose bisphosphate carboxylase from Archaeoglobus fulgidus (strain ATCC 49558 / DSM 4304 / JCM 9628 / NBRC 100126 / VC-16).